The sequence spans 200 residues: Sorting nexin-10 (200 aa).

Positions 8 to 125 (EEFVSVWVRD…SLHLFLQSHL (118 aa)) are required for interaction with ATP6V1D. Residues 10–127 (FVSVWVRDPR…HLFLQSHLNS (118 aa)) form the PX domain. Arginine 53, lysine 79, and arginine 94 together coordinate a 1,2-diacyl-sn-glycero-3-phospho-(1D-myo-inositol-3-phosphate). The segment covering 156–167 (FPEEEEGKKEND) has biased composition (basic and acidic residues). The interval 156–200 (FPEEEEGKKENDIDYDSESSSSGFGHSSDDSSSHGCKMSTAPQES) is disordered.

It belongs to the sorting nexin family. Interacts with ATP6V1D; may play a role in ciliogenesis.

The protein localises to the cytoplasm. It is found in the endosome membrane. It localises to the cytoskeleton. The protein resides in the microtubule organizing center. Its subcellular location is the centrosome. Functionally, probable phosphoinositide-binding protein involved in protein sorting and membrane trafficking in endosomes. Plays a role in cilium biogenesis through regulation of the transport and the localization of proteins to the cilium. Required for the localization to the cilium of V-ATPase subunit ATP6V1D and ATP6V0D1, and RAB8A. Involved in osteoclast differentiation and therefore bone resorption. The polypeptide is Sorting nexin-10 (SNX10) (Bos taurus (Bovine)).